The primary structure comprises 945 residues: Leucine--tRNA ligase (945 aa).

Positions 43–53 (PYPNGAVHIGH) match the 'HIGH' region motif. The 'KMSKS' region motif lies at 638-642 (KMSKS). An ATP-binding site is contributed by Lys641.

This sequence belongs to the class-I aminoacyl-tRNA synthetase family.

The protein resides in the cytoplasm. The enzyme catalyses tRNA(Leu) + L-leucine + ATP = L-leucyl-tRNA(Leu) + AMP + diphosphate. This Pyrobaculum islandicum (strain DSM 4184 / JCM 9189 / GEO3) protein is Leucine--tRNA ligase.